A 304-amino-acid chain; its full sequence is Oxygen-dependent coproporphyrinogen-III oxidase (304 aa).

Serine 94 is a binding site for substrate. A divalent metal cation contacts are provided by histidine 98 and histidine 108. Histidine 108 (proton donor) is an active-site residue. 110 to 112 (NVR) provides a ligand contact to substrate. Residues histidine 147 and histidine 177 each coordinate a divalent metal cation. The tract at residues 242-277 (YVEFNLVYDRGTLFGLQTGGRTESILMSMPPLVRWE) is important for dimerization. Position 260 to 262 (260 to 262 (GGR)) interacts with substrate.

This sequence belongs to the aerobic coproporphyrinogen-III oxidase family. Homodimer. The cofactor is a divalent metal cation.

The protein resides in the cytoplasm. It catalyses the reaction coproporphyrinogen III + O2 + 2 H(+) = protoporphyrinogen IX + 2 CO2 + 2 H2O. The protein operates within porphyrin-containing compound metabolism; protoporphyrin-IX biosynthesis; protoporphyrinogen-IX from coproporphyrinogen-III (O2 route): step 1/1. Its function is as follows. Involved in the heme biosynthesis. Catalyzes the aerobic oxidative decarboxylation of propionate groups of rings A and B of coproporphyrinogen-III to yield the vinyl groups in protoporphyrinogen-IX. In Shewanella halifaxensis (strain HAW-EB4), this protein is Oxygen-dependent coproporphyrinogen-III oxidase.